A 35-amino-acid chain; its full sequence is Bacteriocin SRCAM 1580 (35 aa).

It belongs to the bacteriocin class IIA/YGNGV family.

Its subcellular location is the secreted. Bacteriocin with antibacterial activity against C.jejuni. The protein is Bacteriocin SRCAM 1580 of Niallia circulans (Bacillus circulans).